Consider the following 137-residue polypeptide: Large ribosomal subunit protein uL16 (137 aa).

The protein belongs to the universal ribosomal protein uL16 family. As to quaternary structure, part of the 50S ribosomal subunit.

Its function is as follows. Binds 23S rRNA and is also seen to make contacts with the A and possibly P site tRNAs. This chain is Large ribosomal subunit protein uL16, found in Hydrogenovibrio crunogenus (strain DSM 25203 / XCL-2) (Thiomicrospira crunogena).